We begin with the raw amino-acid sequence, 199 residues long: Peroxiredoxin-2 (199 aa).

Residues 7-165 (AHVGKPAPEF…ALRLVQAFQY (159 aa)) form the Thioredoxin domain. Cysteine 52 functions as the Cysteine sulfenic acid (-SOH) intermediate in the catalytic mechanism. Serine 113 is subject to Phosphoserine. The residue at position 183 (threonine 183) is a Phosphothreonine. At lysine 197 the chain carries N6-acetyllysine.

This sequence belongs to the peroxiredoxin family. AhpC/Prx1 subfamily. In terms of assembly, homodimer; disulfide-linked, upon oxidation. 5 homodimers assemble to form a ring-like decamer. Interacts with TIPIN. Post-translationally, the enzyme can be inactivated by further oxidation of the cysteine sulfenic acid (C(P)-SOH) to sulphinic acid (C(P)-SO2H) instead of its condensation to a disulfide bond. It can be reactivated by forming a transient disulfide bond with sulfiredoxin SRXN1, which reduces the cysteine sulfinic acid in an ATP- and Mg-dependent manner. In terms of processing, acetylation increases resistance to transition to high molecular-mass complexes. Deacetylated by HDAC6 which decreases reducing activity.

It is found in the cytoplasm. The enzyme catalyses a hydroperoxide + [thioredoxin]-dithiol = an alcohol + [thioredoxin]-disulfide + H2O. Thiol-specific peroxidase that catalyzes the reduction of hydrogen peroxide and organic hydroperoxides to water and alcohols, respectively. Plays a role in cell protection against oxidative stress by detoxifying peroxides and as sensor of hydrogen peroxide-mediated signaling events. Might participate in the signaling cascades of growth factors and tumor necrosis factor-alpha by regulating the intracellular concentrations of H(2)O(2). The protein is Peroxiredoxin-2 (PRDX2) of Bos taurus (Bovine).